The sequence spans 526 residues: Adenylosuccinate synthetase (526 aa).

GTP-binding positions include Gly102 to Lys108 and Gly130 to Thr132. Asp103 serves as the catalytic Proton acceptor. Residues Asp103 and Gly130 each coordinate Mg(2+). Residues Asp103 to Lys106, Asn128 to His131, Thr219, Arg233, Asn310, Thr325, and Arg392 each bind IMP. His131 (proton donor) is an active-site residue. Thr388–Arg394 contributes to the substrate binding site. GTP is bound by residues Arg394, Lys420–Asp422, and Gly502–Gly504.

The protein belongs to the adenylosuccinate synthetase family. Homodimer. The cofactor is Mg(2+).

The protein resides in the cytoplasm. The enzyme catalyses IMP + L-aspartate + GTP = N(6)-(1,2-dicarboxyethyl)-AMP + GDP + phosphate + 2 H(+). It participates in purine metabolism; AMP biosynthesis via de novo pathway; AMP from IMP: step 1/2. In terms of biological role, plays an important role in the de novo pathway and in the salvage pathway of purine nucleotide biosynthesis. Catalyzes the first committed step in the biosynthesis of AMP from IMP. This Phaeodactylum tricornutum (strain CCAP 1055/1) protein is Adenylosuccinate synthetase.